The sequence spans 2590 residues: DNA polymerase theta (2590 aa).

Residues 1-12 are compositionally biased toward basic residues; the sequence is MNLLRRSGKRRR. The interval 1–33 is disordered; it reads MNLLRRSGKRRRSESGSDSFSGSGGDSSASPQF. Residues 16 to 30 show a composition bias toward low complexity; sequence GSDSFSGSGGDSSAS. Residues glutamine 96 and 115-122 contribute to the ATP site; that span reads APTSAGKT. Residues 102–286 form the Helicase ATP-binding domain; sequence LGQVLEGKNL…WLNAELYHTD (185 aa). Residues 102 to 554 are helicase activity; the sequence is LGQVLEGKNL…STSQDMHTYA (453 aa). The DEAH box signature appears at 216 to 219; it reads DELH. Residues 321–554 enclose the Helicase C-terminal domain; it reads GDEDHVVSLC…STSQDMHTYA (234 aa). An interaction with RAD51 region spans residues 847-894; it reads DEEEEAVEERRNMRTIWVTGRKGLTEREAAALIVEEARMILQQDLVEM. Lysine 990 carries the post-translational modification N6-acetyllysine. Positions 1034-1060 are disordered; the sequence is KMSRSFRSWKRRKHLKRSRDSSPLKDS. Basic residues predominate over residues 1040–1050; the sequence is RSWKRRKHLKR. Residues serine 1289, serine 1482, serine 1486, serine 1488, serine 1493, serine 1555, and serine 1563 each carry the phosphoserine; by PLK1 modification. The disordered stretch occupies residues 1594–1622; sequence SDPVLDEHHQGDQDGGDQDERAEKSKLTG. Residues 1598 to 1619 are compositionally biased toward basic and acidic residues; sequence LDEHHQGDQDGGDQDERAEKSK. Phosphoserine; by PLK1 occurs at positions 1628 and 1635. At threonine 1755 the chain carries Phosphothreonine; by PLK1. The disordered stretch occupies residues 1777 to 1797; the sequence is PSDIKNHDLSPGSRNGFKDNS. Residues 2097–2584 form a DNA polymerase activity region; sequence AECESQKHIM…KVKIGASWGE (488 aa). Loop regions lie at residues 2142 to 2177 and 2257 to 2322; these read KLPP…GRQF and EIKM…VPFP. The Mg(2+) site is built by aspartate 2330 and tyrosine 2331. Residues 2491-2535 are loop 3; it reads QLETFHSTFKSHGHREGMLQSDQTGLSRKRKLQGMFCPIRGGFFI. Residue aspartate 2540 participates in Mg(2+) binding.

The protein belongs to the DNA polymerase type-A family. In terms of assembly, homomultimer; forms homodimers and homotetramers. Interacts with RAD51. Interacts with ORC2 and ORC4. Interacts with RHNO1; interaction takes place during mitosis and promotes POLQ recruitment to DNA damage sites. Interacts (when phosphorylated) with TOPBP1 (via BRCT domains 7 and 8); promoting POLQ recruitment to DNA damage sites. Mg(2+) serves as cofactor. Phosphorylated by PLK1; promoting interaction with TOPBP1 and recruitment to DNA damage sites. Highly expressed in testis.

Its subcellular location is the nucleus. It localises to the chromosome. The enzyme catalyses DNA(n) + a 2'-deoxyribonucleoside 5'-triphosphate = DNA(n+1) + diphosphate. The catalysed reaction is ATP + H2O = ADP + phosphate + H(+). With respect to regulation, specifically inhibited by the antibiotic novobiocin. The polymerase activity is specifically inhibited by the small molecule ART558. Novobiocin and ART558 confer specific killing of BRCA1/2-deficient cells and synergize with the poly [ADP-ribose] polymerase (PARP) inhibitor olaparib. Low-fidelity DNA polymerase with a helicase activity that promotes microhomology-mediated end-joining (MMEJ), an alternative non-homologous end-joining (NHEJ) machinery required to repair double-strand breaks in DNA during mitosis. MMEJ is an error-prone repair pathway that produces deletions of sequences from the strand being repaired and promotes genomic rearrangements, such as telomere fusions, some of them leading to cellular transformation. MMEJ is required during mitosis to repair persistent double-strand breaks that originate in S-phase. Although error-prone, MMEJ protects against chromosomal instability and tumorigenesis. The polymerase acts by binding directly the 2 ends of resected double-strand breaks, allowing microhomologous sequences in the overhangs to form base pairs. It then extends each strand from the base-paired region using the opposing overhang as a template. Requires partially resected DNA containing 2 to 6 base pairs of microhomology to perform MMEJ. The polymerase lacks proofreading activity and is highly promiscuous: unlike most polymerases, promotes extension of ssDNA and partial ssDNA (pssDNA) substrates. When the ends of a break do not contain terminal microhomology must identify embedded complementary sequences through a scanning step. Also acts as a DNA helicase, promoting dissociation of the replication protein A complex (RPA/RP-A), composed of RPA1, RPA2 and RPA3, from resected double-strand breaks to allow their annealing and subsequent joining by MMEJ. Removal of RPA/RP-A complex proteins prevents RAD51 accumulation at resected ends, thereby inhibiting homology-recombination repair (HR) pathway. Also shows RNA-directed DNA polymerase activity to mediate DNA repair in vitro; however this activity needs additional evidence in vivo. May also have lyase activity. Involved in somatic hypermutation of immunoglobulin genes, a process that requires the activity of DNA polymerases to ultimately introduce mutations at both A/T and C/G base pairs. POLQ-mediated end joining activity is involved in random integration of exogenous DNA hampers. This is DNA polymerase theta from Homo sapiens (Human).